Reading from the N-terminus, the 61-residue chain is Photosystem II assembly protein Psb34 (61 aa).

Residues Leu-36 to Ala-56 traverse the membrane as a helical segment.

Belongs to the Psb34 family. As to quaternary structure, part of the photosystem II (PSII) assembly intermediate RC47 complex (with D1, D2, CP47, PsbE, PsbF, PsbH, Psb27 and Psb28); minor amounts are found in other PSII complexes, including mature, dimeric PSII with PsbO and PsbV. No HliA or HliB are detected in any of these complexes. Its interaction with PSII requires both CP47 (psbB) and PsbH. HliA/HliB and Psb34 probably bind to a similar site on CP47; their binding seems to be mutually exclusive.

It localises to the cellular thylakoid membrane. Its function is as follows. Involved in photosystem II (PSII) assembly and/or repair. Probably involved in conversion of late PSII assembly intermediates into mature dimeric PSII, it may mediate the optimal equlibrium of HliA/HliB among the intermediates containing CP47 (psbB) to facilitate photoprotection during assembly. The chain is Photosystem II assembly protein Psb34 from Synechocystis sp. (strain ATCC 27184 / PCC 6803 / Kazusa).